Reading from the N-terminus, the 969-residue chain is Squamosa promoter-binding-like protein 6 (969 aa).

2 disordered regions span residues 1-25 (MEAA…DMDR) and 54-81 (EASG…VNAR). Low complexity predominate over residues 55 to 74 (ASGLALNSSPSSSEEAGAAS). The segment at 149–226 (GPACQVEGCT…AGHNRRRRKT (78 aa)) adopts an SBP-type zinc-finger fold. The Zn(2+) site is built by Cys-152, Cys-157, Cys-174, His-177, Cys-193, Cys-196, His-200, and Cys-212. A Bipartite nuclear localization signal motif is present at residues 209–225 (KRSCRRRLAGHNRRRRK). Positions 377 to 434 (GMEGFEDGYEGSPTPAFKTTDSPNCPSWMHQDSTQSPPQTSGNSDSTSAQSLSSSNGD) are disordered. The span at 393 to 419 (FKTTDSPNCPSWMHQDSTQSPPQTSGN) shows a compositional bias: polar residues. Residues 420 to 431 (SDSTSAQSLSSS) are compositionally biased toward low complexity.

In terms of tissue distribution, ubiquitous.

It localises to the nucleus. Functionally, trans-acting factor that binds specifically to the consensus nucleotide sequence 5'-TNCGTACAA-3'. The chain is Squamosa promoter-binding-like protein 6 (SPL6) from Oryza sativa subsp. japonica (Rice).